The following is a 510-amino-acid chain: Mitochondrial metal transporter 1 (510 aa).

The segment at 120-141 (ADKPSSLNLHSHTHSHGHTHSH) is disordered. The span at 130 to 141 (SHTHSHGHTHSH) shows a compositional bias: basic residues. The next 6 membrane-spanning stretches (helical) occupy residues 165–185 (WVGL…GIVF), 194–214 (AIHA…VGLA), 241–261 (LAMA…GPVI), 286–306 (VTDI…EWIF), 333–353 (LTSL…IQSL), and 356–376 (IGGL…MCIA).

It belongs to the cation diffusion facilitator (CDF) transporter (TC 2.A.4) family. SLC30A subfamily.

Its subcellular location is the mitochondrion membrane. Its function is as follows. Mitochondrial metal transporter involved in mitochondrial iron accumulation. This chain is Mitochondrial metal transporter 1 (MMT1), found in Saccharomyces cerevisiae (strain ATCC 204508 / S288c) (Baker's yeast).